The sequence spans 234 residues: BTB/POZ domain-containing protein KCTD5 (234 aa).

An N-acetylalanine modification is found at A2. Residues 44–146 enclose the BTB domain; sequence KWVRLNVGGT…LVKDKIRERD (103 aa). The segment at 211–234 is disordered; the sequence is NSPHGPASEPSEKAKILQERGSRM. The segment covering 220–234 has biased composition (basic and acidic residues); sequence PSEKAKILQERGSRM.

Homopentamer. Interacts (via C-terminus) with GRASP55/GORASP2. Interacts with CUL3 and with ubiquitinated proteins. Interacts with CRY1.

Its subcellular location is the cytoplasm. It is found in the cytosol. It localises to the nucleus. Its interaction with CUL3 suggests that it may act as a substrate adapter in some E3 ligase complex. Does not affect the function of Kv channel Kv2.1/KCNB1, Kv1.2/KCNA2, Kv4.2/KCND2 and Kv3.4/KCNC4. The protein is BTB/POZ domain-containing protein KCTD5 (KCTD5) of Bos taurus (Bovine).